A 627-amino-acid chain; its full sequence is CTP synthase (627 aa).

In terms of domain architecture, Glutamine amidotransferase type-1 spans 300 to 554 (CIAVVGKYTK…LASVDRLNQY (255 aa)). Active-site for GATase activity residues include C399, H526, and E528. Phosphoserine occurs at positions 567, 570, 571, and 588. A Phosphothreonine modification is found at T595. Residues 599-613 (GISKSCNGSISTSDS) show a composition bias toward polar residues. The segment at 599 to 627 (GISKSCNGSISTSDSEGACGGVDPTNGHK) is disordered.

Belongs to the CTP synthase family. As to expression, in ovary, expressed in oocytes, follicle cells and nurse cells. Also expressed in larval and adult testis (at protein level). In larvae, expressed in lymph gland, salivary gland, regions of the midgut, testis, optical lobe and trachea. Isoform 1 is expressed in adult testis, ovary, accessory gland and head. Isoform 2 is weakly expressed in ovary.

Its subcellular location is the cytoplasm. The catalysed reaction is UTP + L-glutamine + ATP + H2O = CTP + L-glutamate + ADP + phosphate + 2 H(+). The protein operates within pyrimidine metabolism; CTP biosynthesis via de novo pathway; CTP from UDP: step 2/2. Functionally, catalyzes the ATP-dependent amination of UTP to CTP with either L-glutamine or ammonia as the source of nitrogen. Constitutes the rate-limiting enzyme in the synthesis of cytosine nucleotides. Its function is as follows. Required for assembly of cytoophidium in female germline cells. In nurse cells, CTPsyn filament assembly in the cytoophidium is regulated by Ack kinase which may thereby contribute to the control of CTP production at specific stages of oogenesis and development of the nurse cell membrane. The polypeptide is CTP synthase (Drosophila melanogaster (Fruit fly)).